The following is a 479-amino-acid chain: Cardiolipin synthase A (479 aa).

2 consecutive transmembrane segments (helical) span residues 8 to 28 (FFGY…LHAV) and 38 to 58 (IAWA…YLIF). PLD phosphodiesterase domains follow at residues 218-245 (VNFR…GDEY) and 392-419 (QPGF…DNRS). Catalysis depends on residues His-223, Lys-225, Asp-230, His-397, Lys-399, and Asp-404.

This sequence belongs to the phospholipase D family. Cardiolipin synthase subfamily. ClsA sub-subfamily.

It localises to the cell inner membrane. The catalysed reaction is 2 a 1,2-diacyl-sn-glycero-3-phospho-(1'-sn-glycerol) = a cardiolipin + glycerol. Catalyzes the reversible phosphatidyl group transfer from one phosphatidylglycerol molecule to another to form cardiolipin (CL) (diphosphatidylglycerol) and glycerol. The sequence is that of Cardiolipin synthase A from Pseudomonas entomophila (strain L48).